The primary structure comprises 107 residues: Ig kappa chain V-VI region NQ2-48.2.2 (107 aa).

The segment at 1 to 23 is framework-1; that stretch reads QILLTQSPAIMSASPGQKVTMTC. A disulfide bond links Cys-23 and Cys-87. Residues 24 to 33 form a complementarity-determining-1 region; sequence SASSSVSYMH. Residues 34–48 form a framework-2 region; that stretch reads WYQQKSGTSPKRWIY. The interval 49-55 is complementarity-determining-2; the sequence is DTSKLAS. A framework-3 region spans residues 56–87; sequence GVPARFSGSGSATSYSLTITSMQAEDAATYYC. Positions 88 to 96 are complementarity-determining-3; the sequence is QQWSSNPLT. The interval 97–106 is framework-4; the sequence is FGAGTKLXLK.

In terms of biological role, anti-2-phenyl oxazolone (PHOX) Antibody. This is Ig kappa chain V-VI region NQ2-48.2.2 from Mus musculus (Mouse).